A 308-amino-acid chain; its full sequence is Probable 5-dehydro-4-deoxyglucarate dehydratase (308 aa).

Belongs to the DapA family.

The catalysed reaction is 5-dehydro-4-deoxy-D-glucarate + H(+) = 2,5-dioxopentanoate + CO2 + H2O. It functions in the pathway carbohydrate acid metabolism; D-glucarate degradation; 2,5-dioxopentanoate from D-glucarate: step 2/2. In Oceanobacillus iheyensis (strain DSM 14371 / CIP 107618 / JCM 11309 / KCTC 3954 / HTE831), this protein is Probable 5-dehydro-4-deoxyglucarate dehydratase.